Reading from the N-terminus, the 523-residue chain is Bifunctional purine biosynthesis protein PurH (523 aa).

One can recognise an MGS-like domain in the interval 1 to 152 (MSTDDGRRPI…KNHPSAAVVT (152 aa)).

This sequence belongs to the PurH family.

The enzyme catalyses (6R)-10-formyltetrahydrofolate + 5-amino-1-(5-phospho-beta-D-ribosyl)imidazole-4-carboxamide = 5-formamido-1-(5-phospho-D-ribosyl)imidazole-4-carboxamide + (6S)-5,6,7,8-tetrahydrofolate. The catalysed reaction is IMP + H2O = 5-formamido-1-(5-phospho-D-ribosyl)imidazole-4-carboxamide. It participates in purine metabolism; IMP biosynthesis via de novo pathway; 5-formamido-1-(5-phospho-D-ribosyl)imidazole-4-carboxamide from 5-amino-1-(5-phospho-D-ribosyl)imidazole-4-carboxamide (10-formyl THF route): step 1/1. It functions in the pathway purine metabolism; IMP biosynthesis via de novo pathway; IMP from 5-formamido-1-(5-phospho-D-ribosyl)imidazole-4-carboxamide: step 1/1. In Mycobacterium bovis (strain BCG / Pasteur 1173P2), this protein is Bifunctional purine biosynthesis protein PurH.